We begin with the raw amino-acid sequence, 341 residues long: Thromboxane A2 receptor (341 aa).

Residues 1 to 29 (MWLNSTSLGACFRPVNITLQERRAIASPW) are Extracellular-facing. Residues asparagine 4 and asparagine 16 are each glycosylated (N-linked (GlcNAc...) asparagine). A helical transmembrane segment spans residues 30 to 52 (FAASFCALGLGSNLLALSVLAGA). The Cytoplasmic portion of the chain corresponds to 53-65 (RPGAGPRSSFLAL). A helical membrane pass occupies residues 66 to 86 (LCGLVLTDFLGLLVTGAVVAS). Residues 87–105 (QHAALLDWRATDPGCRLCH) lie on the Extracellular side of the membrane. The cysteines at positions 104 and 181 are disulfide-linked. A helical transmembrane segment spans residues 106–127 (FMGAAMVFFGLCPLLLGAAMAA). At 128–147 (ERFVGITRPFSRPAATSRRA) the chain is on the cytoplasmic side. A helical membrane pass occupies residues 148 to 170 (WATVGLVWVGAGTLGLLPLLGLG). Residues 171-191 (RYSVQYPGSWCFLTLGAERGD) are Extracellular-facing. A helical membrane pass occupies residues 192-217 (VAFGLMFALLGSVSVGLSLLLNTVSV). Residues 218-244 (ATLCRVYHAREATQRPRDCEVEMMVQL) lie on the Cytoplasmic side of the membrane. The helical transmembrane segment at 245-268 (VGIMVVATVCWMPLLVFILQTLLQ) threads the bilayer. The Extracellular portion of the chain corresponds to 269–287 (TLPVMSPSGQLLRTTERQL). A helical membrane pass occupies residues 288–309 (LIYLRVATWNQILDPWVYILFR). The Cytoplasmic segment spans residues 310–341 (RSVLRRLHPRFTSQLQAVSLHSPPTQAMLSGP). Serine 328 is modified (phosphoserine).

Belongs to the G-protein coupled receptor 1 family. Interacts with RPGRIP1L. Interacts with RACK1; the interaction regulates TBXA2R cell surface expression. In the brain, expressed in all types of glial cells. In the kidney, expressed in the mesangial cells of the glomerulus, smooth muscle cells of the renal arterioles, and in transitional cell epithelium of renal pelvis.

The protein resides in the cell membrane. Functionally, receptor for thromboxane A2 (TXA2), a potent stimulator of platelet aggregation. The activity of this receptor is mediated by a G-protein that activates a phosphatidylinositol-calcium second messenger system. In the kidney, the binding of TXA2 to glomerular TP receptors causes intense vasoconstriction. Activates phospholipase C and adenylyl cyclase. The sequence is that of Thromboxane A2 receptor (Tbxa2r) from Rattus norvegicus (Rat).